Here is a 114-residue protein sequence, read N- to C-terminus: MEAIAKHRYARTSAQKARLVADQVRGLSVDKALNILTFSPKKAAALVKKVLESAIANAEHNEGADIDALRVATIMVDEGPSMKRIRPRAKGRADRILKRTAHITVVVSDAKAGR.

Belongs to the universal ribosomal protein uL22 family. In terms of assembly, part of the 50S ribosomal subunit.

In terms of biological role, this protein binds specifically to 23S rRNA; its binding is stimulated by other ribosomal proteins, e.g. L4, L17, and L20. It is important during the early stages of 50S assembly. It makes multiple contacts with different domains of the 23S rRNA in the assembled 50S subunit and ribosome. Its function is as follows. The globular domain of the protein is located near the polypeptide exit tunnel on the outside of the subunit, while an extended beta-hairpin is found that lines the wall of the exit tunnel in the center of the 70S ribosome. The sequence is that of Large ribosomal subunit protein uL22 from Aeromonas hydrophila subsp. hydrophila (strain ATCC 7966 / DSM 30187 / BCRC 13018 / CCUG 14551 / JCM 1027 / KCTC 2358 / NCIMB 9240 / NCTC 8049).